The sequence spans 155 residues: Aspartate carbamoyltransferase regulatory chain (155 aa).

Residues C109, C114, C138, and C141 each contribute to the Zn(2+) site.

Belongs to the PyrI family. As to quaternary structure, contains catalytic and regulatory chains. Requires Zn(2+) as cofactor.

Its function is as follows. Involved in allosteric regulation of aspartate carbamoyltransferase. This Vibrio cholerae serotype O1 (strain ATCC 39541 / Classical Ogawa 395 / O395) protein is Aspartate carbamoyltransferase regulatory chain.